A 493-amino-acid polypeptide reads, in one-letter code: Cholesteryl ester transfer protein (493 aa).

A signal peptide spans 1–17 (MLAATVLTLALLGNAHA). The N-linked (GlcNAc...) (complex) asparagine glycan is linked to Asn105. A disulfide bond links Cys160 and Cys201. N-linked (GlcNAc...) asparagine glycans are attached at residues Asn257, Asn358, and Asn413.

This sequence belongs to the BPI/LBP/Plunc superfamily. BPI/LBP family. As to expression, expressed by the liver and secreted in plasma.

Its subcellular location is the secreted. It catalyses the reaction cholesteryl (9Z-octadecenoate)(in) = cholesteryl (9Z-octadecenoate)(out). The enzyme catalyses 1,2,3-tri-(9Z-octadecenoyl)-glycerol(in) = 1,2,3-tri-(9Z-octadecenoyl)-glycerol(out). It carries out the reaction cholesteryl (9Z,12Z)-octadecadienoate(in) = cholesteryl (9Z,12Z)-octadecadienoate(out). Functionally, involved in the transfer of neutral lipids, including cholesteryl ester and triglyceride, among lipoprotein particles. Allows the net movement of cholesteryl ester from high density lipoproteins/HDL to triglyceride-rich very low density lipoproteins/VLDL, and the equimolar transport of triglyceride from VLDL to HDL. Regulates the reverse cholesterol transport, by which excess cholesterol is removed from peripheral tissues and returned to the liver for elimination. The chain is Cholesteryl ester transfer protein from Homo sapiens (Human).